The sequence spans 330 residues: Methylthioribose-1-phosphate isomerase (330 aa).

Substrate-binding positions include 49–51, arginine 83, and glutamine 179; that span reads RGA. Aspartate 220 acts as the Proton donor in catalysis. 230–231 contributes to the substrate binding site; it reads NK.

It belongs to the eIF-2B alpha/beta/delta subunits family. MtnA subfamily.

The catalysed reaction is 5-(methylsulfanyl)-alpha-D-ribose 1-phosphate = 5-(methylsulfanyl)-D-ribulose 1-phosphate. The protein operates within amino-acid biosynthesis; L-methionine biosynthesis via salvage pathway; L-methionine from S-methyl-5-thio-alpha-D-ribose 1-phosphate: step 1/6. In terms of biological role, catalyzes the interconversion of methylthioribose-1-phosphate (MTR-1-P) into methylthioribulose-1-phosphate (MTRu-1-P). This chain is Methylthioribose-1-phosphate isomerase, found in Thermus thermophilus (strain ATCC BAA-163 / DSM 7039 / HB27).